The chain runs to 230 residues: Transcriptional regulatory protein CitT (230 aa).

In terms of domain architecture, Response regulatory spans 6–124 (KVLIIEDDFR…VLHQRLDAYV (119 aa)). Aspartate 59 carries the post-translational modification 4-aspartylphosphate. Residues 184 to 203 (AMEGARLIGASRSTVRRYFE) constitute a DNA-binding region (H-T-H motif).

In terms of processing, phosphorylated by CitS.

The protein resides in the cytoplasm. Functionally, member of the two-component regulatory system CitT/CitS. This is Transcriptional regulatory protein CitT (citT) from Halalkalibacterium halodurans (strain ATCC BAA-125 / DSM 18197 / FERM 7344 / JCM 9153 / C-125) (Bacillus halodurans).